The chain runs to 309 residues: Porphobilinogen deaminase (309 aa).

At Cys243 the chain carries S-(dipyrrolylmethanemethyl)cysteine.

This sequence belongs to the HMBS family. As to quaternary structure, monomer. Dipyrromethane is required as a cofactor.

The enzyme catalyses 4 porphobilinogen + H2O = hydroxymethylbilane + 4 NH4(+). The protein operates within porphyrin-containing compound metabolism; protoporphyrin-IX biosynthesis; coproporphyrinogen-III from 5-aminolevulinate: step 2/4. Functionally, tetrapolymerization of the monopyrrole PBG into the hydroxymethylbilane pre-uroporphyrinogen in several discrete steps. The chain is Porphobilinogen deaminase (hemC) from Deinococcus radiodurans (strain ATCC 13939 / DSM 20539 / JCM 16871 / CCUG 27074 / LMG 4051 / NBRC 15346 / NCIMB 9279 / VKM B-1422 / R1).